Here is a 335-residue protein sequence, read N- to C-terminus: MLP-like protein 28 (335 aa).

The protein belongs to the MLP family.

Can bind steroids (in vitro), and may also bind other types of hydrophobic ligands. The protein is MLP-like protein 28 (MLP28) of Arabidopsis thaliana (Mouse-ear cress).